A 221-amino-acid polypeptide reads, in one-letter code: Zingipain-2 (221 aa).

Cystine bridges form between Cys24–Cys65 and Cys58–Cys98. Cys27 is a catalytic residue. 2 N-linked (GlcNAc...) asparagine glycosylation sites follow: Asn99 and Asn156. An intrachain disulfide couples Cys155 to Cys206. Residue His161 is part of the active site.

It belongs to the peptidase C1 family.

The catalysed reaction is Preferential cleavage of peptides with a proline residue at the P2 position.. Its function is as follows. Cysteine proteinase with a specific activity toward peptides with a proline residue at the P2 position. This is Zingipain-2 from Zingiber officinale (Ginger).